A 765-amino-acid polypeptide reads, in one-letter code: Phosphoribosylformylglycinamidine synthase subunit PurL (765 aa).

Histidine 41 is an active-site residue. 2 residues coordinate ATP: tyrosine 44 and lysine 83. Glutamate 85 is a Mg(2+) binding site. Residues 86 to 89 (SHNH) and arginine 108 each bind substrate. Residue histidine 87 is the Proton acceptor of the active site. Residue aspartate 109 participates in Mg(2+) binding. Glutamine 232 contributes to the substrate binding site. Aspartate 260 is a binding site for Mg(2+). Residue 304–306 (ESQ) participates in substrate binding. ATP-binding residues include aspartate 503 and glycine 540. A Mg(2+)-binding site is contributed by asparagine 541. Residue serine 543 coordinates substrate.

It belongs to the FGAMS family. Monomer. Part of the FGAM synthase complex composed of 1 PurL, 1 PurQ and 2 PurS subunits.

The protein localises to the cytoplasm. The enzyme catalyses N(2)-formyl-N(1)-(5-phospho-beta-D-ribosyl)glycinamide + L-glutamine + ATP + H2O = 2-formamido-N(1)-(5-O-phospho-beta-D-ribosyl)acetamidine + L-glutamate + ADP + phosphate + H(+). It functions in the pathway purine metabolism; IMP biosynthesis via de novo pathway; 5-amino-1-(5-phospho-D-ribosyl)imidazole from N(2)-formyl-N(1)-(5-phospho-D-ribosyl)glycinamide: step 1/2. In terms of biological role, part of the phosphoribosylformylglycinamidine synthase complex involved in the purines biosynthetic pathway. Catalyzes the ATP-dependent conversion of formylglycinamide ribonucleotide (FGAR) and glutamine to yield formylglycinamidine ribonucleotide (FGAM) and glutamate. The FGAM synthase complex is composed of three subunits. PurQ produces an ammonia molecule by converting glutamine to glutamate. PurL transfers the ammonia molecule to FGAR to form FGAM in an ATP-dependent manner. PurS interacts with PurQ and PurL and is thought to assist in the transfer of the ammonia molecule from PurQ to PurL. In Synechococcus sp. (strain WH7803), this protein is Phosphoribosylformylglycinamidine synthase subunit PurL.